Here is a 665-residue protein sequence, read N- to C-terminus: tRNA 5-methylaminomethyl-2-thiouridine biosynthesis bifunctional protein MnmC (665 aa).

Residues 1–243 are tRNA (mnm(5)s(2)U34)-methyltransferase; sequence MSQTSLHHAR…KWAMLAGERV (243 aa). The interval 268 to 665 is FAD-dependent cmnm(5)s(2)U34 oxidoreductase; sequence IGGGIASAMT…RKLLKGKPLN (398 aa).

In the N-terminal section; belongs to the methyltransferase superfamily. tRNA (mnm(5)s(2)U34)-methyltransferase family. This sequence in the C-terminal section; belongs to the DAO family. The cofactor is FAD.

Its subcellular location is the cytoplasm. The enzyme catalyses 5-aminomethyl-2-thiouridine(34) in tRNA + S-adenosyl-L-methionine = 5-methylaminomethyl-2-thiouridine(34) in tRNA + S-adenosyl-L-homocysteine + H(+). Functionally, catalyzes the last two steps in the biosynthesis of 5-methylaminomethyl-2-thiouridine (mnm(5)s(2)U) at the wobble position (U34) in tRNA. Catalyzes the FAD-dependent demodification of cmnm(5)s(2)U34 to nm(5)s(2)U34, followed by the transfer of a methyl group from S-adenosyl-L-methionine to nm(5)s(2)U34, to form mnm(5)s(2)U34. This is tRNA 5-methylaminomethyl-2-thiouridine biosynthesis bifunctional protein MnmC from Aeromonas salmonicida (strain A449).